We begin with the raw amino-acid sequence, 450 residues long: MTTKSLSELLEELTPKRVVEELNKYVVGQEEAKKAVAIALRNRWRRQKLPENLRNEVIPKNILMIGPTGVGKTEIARRLANLIKAPFVKVEATKYTEIGYVGRDVESMVRELVEVSFQMVKQEKMKEVRERARRLAEERLLDYLVPHQFTSFGIRESRDAGKREELRQKLRKGELDDRIVEIEVKEKTVPMVGIAGPPGLEELENQIKEMLSGLIPSKRRRKVKVKEALQILEQEEAEKLIDMEEVAREAIYRAENFGIIFIDEIDKIAVKTPGAGPGVSREGVQRDLLPILEGTTVNTKYGPVKTDHILFIGAGAFHMAKPSDLIPELQGRFPIRVELKPLTKEDFKRILVEPENALTKQYIELLKTENVYLEFTDDAIEEIARIAEEINTKTENIGARRLHTVMEKLLEDISFNAPEMAGQTIIIDAKFVKAKLENLVKDEELSRYIL.

ATP-binding positions include Val-27, 69 to 74, Asp-263, Glu-328, and Arg-400; that span reads GVGKTE.

This sequence belongs to the ClpX chaperone family. HslU subfamily. In terms of assembly, a double ring-shaped homohexamer of HslV is capped on each side by a ring-shaped HslU homohexamer. The assembly of the HslU/HslV complex is dependent on binding of ATP.

It localises to the cytoplasm. Functionally, ATPase subunit of a proteasome-like degradation complex; this subunit has chaperone activity. The binding of ATP and its subsequent hydrolysis by HslU are essential for unfolding of protein substrates subsequently hydrolyzed by HslV. HslU recognizes the N-terminal part of its protein substrates and unfolds these before they are guided to HslV for hydrolysis. The protein is ATP-dependent protease ATPase subunit HslU of Aquifex aeolicus (strain VF5).